The chain runs to 427 residues: A-adding tRNA nucleotidyltransferase (427 aa).

An ATP-binding site is contributed by 49–52 (GTVR). Residues Asp62 and Asp64 each coordinate Mg(2+). Residues 136 to 137 (RD), Asn141, 181 to 190 (DPTRLLRGVR), Arg194, and Arg225 each bind ATP.

Belongs to the tRNA nucleotidyltransferase/poly(A) polymerase family. It depends on Mg(2+) as a cofactor.

The enzyme catalyses a tRNA with a 3' CC end + ATP = a tRNA with a 3' CCA end + diphosphate. In terms of biological role, tRNA nucleotidyltransferase involved in the synthesis of the tRNA CCA terminus. Adds the terminal adenosine residue to tRNA. The polypeptide is A-adding tRNA nucleotidyltransferase (Halalkalibacterium halodurans (strain ATCC BAA-125 / DSM 18197 / FERM 7344 / JCM 9153 / C-125) (Bacillus halodurans)).